The primary structure comprises 133 residues: Membrane protein FAM174B (133 aa).

The N-terminal stretch at 1–19 is a signal peptide; sequence MWLYTFAVALIVIAQEING. Topologically, residues 20-67 are extracellular; sequence EPHTRPSSATPLNATLPPQEEGSAQNTTDAAVGSRLSTILRDLPTIKN. The segment at 22-47 is disordered; it reads HTRPSSATPLNATLPPQEEGSAQNTT. N-linked (GlcNAc...) asparagine glycosylation is found at N32, N45, and N67. The helical transmembrane segment at 68–88 threads the bilayer; it reads ISIFICVLTTLLITCLVIKIC. Residues 89-133 are Cytoplasmic-facing; that stretch reads RSARKIRKTRKYDIITTPAERVEMAPLNEENDEEDDSTLFDVKYR. A disordered region spans residues 113 to 133; that stretch reads APLNEENDEEDDSTLFDVKYR. Residues 117–126 are compositionally biased toward acidic residues; the sequence is EENDEEDDST.

It belongs to the FAM174 family.

The protein localises to the cell membrane. The protein resides in the golgi apparatus. In terms of biological role, essential for Golgi structural integrity. This Danio rerio (Zebrafish) protein is Membrane protein FAM174B (Fam174b).